Here is a 334-residue protein sequence, read N- to C-terminus: Lipoyl synthase (334 aa).

A disordered region spans residues 1–36; the sequence is MSDALIAPNASSSEAPQSPAEHYDPTRKQKSADKTA. Over residues 7-20 the composition is skewed to low complexity; that stretch reads APNASSSEAPQSPA. Basic and acidic residues predominate over residues 21 to 36; that stretch reads EHYDPTRKQKSADKTA. [4Fe-4S] cluster is bound by residues Cys-81, Cys-86, Cys-92, Cys-107, Cys-111, Cys-114, and Ser-321. The 219-residue stretch at 92–310 folds into the Radical SAM core domain; that stretch reads CFGKGTATFM…EEEAYKMGFT (219 aa).

The protein belongs to the radical SAM superfamily. Lipoyl synthase family. The cofactor is [4Fe-4S] cluster.

Its subcellular location is the cytoplasm. It catalyses the reaction [[Fe-S] cluster scaffold protein carrying a second [4Fe-4S](2+) cluster] + N(6)-octanoyl-L-lysyl-[protein] + 2 oxidized [2Fe-2S]-[ferredoxin] + 2 S-adenosyl-L-methionine + 4 H(+) = [[Fe-S] cluster scaffold protein] + N(6)-[(R)-dihydrolipoyl]-L-lysyl-[protein] + 4 Fe(3+) + 2 hydrogen sulfide + 2 5'-deoxyadenosine + 2 L-methionine + 2 reduced [2Fe-2S]-[ferredoxin]. It functions in the pathway protein modification; protein lipoylation via endogenous pathway; protein N(6)-(lipoyl)lysine from octanoyl-[acyl-carrier-protein]: step 2/2. Functionally, catalyzes the radical-mediated insertion of two sulfur atoms into the C-6 and C-8 positions of the octanoyl moiety bound to the lipoyl domains of lipoate-dependent enzymes, thereby converting the octanoylated domains into lipoylated derivatives. The sequence is that of Lipoyl synthase from Cupriavidus taiwanensis (strain DSM 17343 / BCRC 17206 / CCUG 44338 / CIP 107171 / LMG 19424 / R1) (Ralstonia taiwanensis (strain LMG 19424)).